The chain runs to 358 residues: Glutamate 5-kinase (358 aa).

An ATP-binding site is contributed by K9. Substrate is bound by residues S49, D136, and N148. ATP contacts are provided by residues 168 to 169 (TD) and 210 to 216 (TGGMTTK). One can recognise a PUA domain in the interval 275–353 (DAAVEVDAGA…RAEGVLIHRN (79 aa)).

The protein belongs to the glutamate 5-kinase family.

Its subcellular location is the cytoplasm. It catalyses the reaction L-glutamate + ATP = L-glutamyl 5-phosphate + ADP. It functions in the pathway amino-acid biosynthesis; L-proline biosynthesis; L-glutamate 5-semialdehyde from L-glutamate: step 1/2. Catalyzes the transfer of a phosphate group to glutamate to form L-glutamate 5-phosphate. This chain is Glutamate 5-kinase, found in Streptococcus suis (strain 05ZYH33).